The following is a 160-amino-acid chain: Cytochrome b6-f complex subunit 4 (160 aa).

Transmembrane regions (helical) follow at residues 36 to 56 (LLYM…GLAV), 95 to 115 (LLGV…PFIE), and 131 to 151 (TVFL…CLPI).

This sequence belongs to the cytochrome b family. PetD subfamily. The 4 large subunits of the cytochrome b6-f complex are cytochrome b6, subunit IV (17 kDa polypeptide, petD), cytochrome f and the Rieske protein, while the 4 small subunits are petG, petL, petM and petN. The complex functions as a dimer.

The protein localises to the plastid. The protein resides in the chloroplast thylakoid membrane. Component of the cytochrome b6-f complex, which mediates electron transfer between photosystem II (PSII) and photosystem I (PSI), cyclic electron flow around PSI, and state transitions. This is Cytochrome b6-f complex subunit 4 from Tupiella akineta (Green alga).